We begin with the raw amino-acid sequence, 234 residues long: 2,3-bisphosphoglycerate-dependent phosphoglycerate mutase 1 (234 aa).

Residues 14-21, 27-28, arginine 66, and 93-96 contribute to the substrate site; these read RHGQSIWN, TG, and ERHY. The active-site Tele-phosphohistidine intermediate is histidine 15. Glutamate 93 (proton donor/acceptor) is an active-site residue.

The protein belongs to the phosphoglycerate mutase family. BPG-dependent PGAM subfamily. In terms of assembly, homodimer.

It catalyses the reaction (2R)-2-phosphoglycerate = (2R)-3-phosphoglycerate. It participates in carbohydrate degradation; glycolysis; pyruvate from D-glyceraldehyde 3-phosphate: step 3/5. Catalyzes the interconversion of 2-phosphoglycerate and 3-phosphoglycerate. In Nitrosomonas europaea (strain ATCC 19718 / CIP 103999 / KCTC 2705 / NBRC 14298), this protein is 2,3-bisphosphoglycerate-dependent phosphoglycerate mutase 1.